Consider the following 505-residue polypeptide: Trans-cinnamate 4-monooxygenase (505 aa).

The chain crosses the membrane as a helical span at residues Leu-3–Val-23. Residues Arg-213–Gln-218 and Ala-306 contribute to the (E)-cinnamate site. Residue Cys-447 participates in heme binding.

This sequence belongs to the cytochrome P450 family. Requires heme as cofactor. As to expression, mostly expressed in stems, and, to a lower extent, in bulbs, roots, leaves and flowers.

The protein resides in the membrane. It carries out the reaction (E)-cinnamate + reduced [NADPH--hemoprotein reductase] + O2 = (E)-4-coumarate + oxidized [NADPH--hemoprotein reductase] + H2O + H(+). The protein operates within alkaloid biosynthesis. Its pathway is phenylpropanoid metabolism; trans-4-coumarate biosynthesis; trans-4-coumarate from trans-cinnamate: step 1/1. In terms of biological role, catalyzes the first oxidative step of the phenylpropanoid pathway in higher plants by transforming trans-cinnamate into p-coumarate. The compounds formed by this pathway are essential components for lignification, pollination, and defense against ultraviolet light, predators and pathogens. Trans-4-coumarate is a precursor to all amaryllidaceae alkaloids such as galanthamine, lycorine and haemanthamine, and including haemanthamine- and crinamine-type alkaloids, promising anticancer agents. In Narcissus pseudonarcissus (Daffodil), this protein is Trans-cinnamate 4-monooxygenase.